The primary structure comprises 547 residues: MDEVYLYSDATTSKIARTVTQKLGFSKASSSGTRLHRGYVEEATLEDKPSQTSHIVFVVHGIGQKMDQGRIIKNTAMMREAARKMEEKHFSNHATHVEFLPVEWRSKLTLDGDTVDSITPDKVRGLRDMLNSSAMDIMYYTSPLYRDELVKGLQQELNRLYSLFCSRNPDFEEKGGKVSIVSHSLGCVITYDIMMGWNPGGLYEQLLQKEEELPDERWMSYEERHLLDELYITKRRLREIEDRLHGLKAPSISQTPALKFKVENFFCMGSPLAVFLALRGIRPGNSGSQDHILPREICNRLLNIFHPTDPVAYRLEPLILKHYSNISPVQIHWYNTSNPLPYEHMKPNFLNPAKEPTSVSDSENIAAIPSPVTSPVLSRRHYGESITNIGKASILGAASIGKGLGGMLFSRFGRSSASQPSEPSKDSLEDDKKPSASPSTTTVATQTLPHSGSGFLDSAYFRLQESFFYLPQLLFPENVMQSKDDSLVELEHRIDFELREGLVESRYWSAVTSHTAYWSSLDVALFLLTFMYKHEHDTEAKPSLGSL.

The active site involves Ser184. One can recognise a DDHD domain in the interval 258–533; that stretch reads LKFKVENFFC…ALFLLTFMYK (276 aa). Ser370 carries the phosphoserine modification. The interval 414-448 is disordered; the sequence is RSSASQPSEPSKDSLEDDKKPSASPSTTTVATQTL. Over residues 423–434 the composition is skewed to basic and acidic residues; that stretch reads PSKDSLEDDKKP. Over residues 435 to 448 the composition is skewed to low complexity; that stretch reads SASPSTTTVATQTL.

It belongs to the PA-PLA1 family. In terms of assembly, forms homooligomers and, to a much smaller extent, heterooligomers with DDHD2. Interacts with SEC23A and SEC24C. Predominantly expressed in testis, in round and elongating spermatids, but not in spermatocytes (at protein level). Also expressed in the brain, and at lower levels in other tissues such as thymus and lung (at protein level).

Its subcellular location is the cytoplasm. The catalysed reaction is a 1,2-diacyl-sn-glycero-3-phosphate + H2O = a 2-acyl-sn-glycerol 3-phosphate + a fatty acid + H(+). It catalyses the reaction a 1,2-diacyl-sn-glycero-3-phospho-(1D-myo-inositol) + H2O = a 2-acyl-sn-glycero-3-phospho-D-myo-inositol + a fatty acid + H(+). It carries out the reaction 1-octadecanoyl-2-(5Z,8Z,11Z,14Z-eicosatetraenoyl)-sn-glycero-3-phospho-(1D-myo-inositol) + H2O = 2-(5Z,8Z,11Z,14Z-eicosatetraenoyl)-sn-glycero-3-phospho-(1D-myo-inositol) + octadecanoate + H(+). The enzyme catalyses a 1-acyl-2-(5Z,8Z,11Z,14Z-eicosatetraenoyl)-sn-glycero-3-phospho-(1D-myo-inositol) + H2O = 2-(5Z,8Z,11Z,14Z-eicosatetraenoyl)-sn-glycero-3-phospho-(1D-myo-inositol) + a fatty acid + H(+). The catalysed reaction is 1,2-dihexadecanoyl-sn-glycero-3-phospho-(1D-myo-inositol) + H2O = 2-hexadecanoyl-sn-glycero-3-phospho-(1D-myo-inositol) + hexadecanoate + H(+). It catalyses the reaction a 1-acyl-2-(5Z,8Z,11Z,14Z)-eicosatetraenoyl-sn-glycero-3-phosphate + H2O = 2-(5Z,8Z,11Z,14Z-eicosatetraenoyl)-sn-glycero-3-phosphate + a fatty acid + H(+). It carries out the reaction 1-(9Z-octadecenoyl)-2-(7Z,10Z,13Z,16Z,19Z-docosapentaenoyl)-sn-glycero-3-phospho-1D-myo-inositol + H2O = 2-(7Z,10Z,13Z,16Z,19Z-docosapentaenoyl)-sn-glycero-3-phospho-1D-myo-inositol + (9Z)-octadecenoate + H(+). The enzyme catalyses 1-(9Z-octadecenoyl)-2-(5Z,8Z,11Z,14Z-eicosatetraenoyl)-sn-glycero-3-phospho-1D-myo-inositol + H2O = 2-(5Z,8Z,11Z,14Z-eicosatetraenoyl)-sn-glycero-3-phospho-(1D-myo-inositol) + (9Z)-octadecenoate + H(+). The catalysed reaction is 1,2-di-(9Z-octadecenoyl)-sn-glycero-3-phospho-1D-myo-inositol + H2O = 2-(9Z-octadecenoyl)-sn-glycero-3-phospho-1D-myo-inositol + (9Z)-octadecenoate + H(+). It catalyses the reaction 1-(9Z-octadecenoyl)-2-(8Z,11Z,14Z-eicosatrienoyl)-sn-glycero-3-phospho-1D-myo-inositol + H2O = 2-(8Z,11Z,14Z-eicosatrienoyl)-sn-glycero-3-phospho-1D-myo-inositol + (9Z)-octadecenoate + H(+). It carries out the reaction 1,2-di-(9Z-octadecenoyl)-sn-glycero-3-phosphate + H2O = 2-(9Z-octadecenoyl)-sn-glycero-3-phosphate + (9Z)-octadecenoate + H(+). The enzyme catalyses 1-hexadecanoyl-2-(9Z-octadecenoyl)-sn-glycero-3-phosphate + H2O = 2-(9Z-octadecenoyl)-sn-glycero-3-phosphate + hexadecanoate + H(+). The catalysed reaction is 1-hexadecanoyl-2-(9Z-octadecenoyl)-sn-glycero-3-phospho-L-serine + H2O = 2-(9Z-octadecenoyl)-sn-glycero-3-phospho-L-serine + hexadecanoate + H(+). It catalyses the reaction 1,2-di-(5Z,8Z,11Z,14Z)-eicosatetraenoyl-sn-glycero-3-phosphate + H2O = 2-(5Z,8Z,11Z,14Z-eicosatetraenoyl)-sn-glycero-3-phosphate + (5Z,8Z,11Z,14Z)-eicosatetraenoate + H(+). It carries out the reaction 1-octadecanoyl-2-(5Z,8Z,11Z,14Z-eicosatetraenoyl)-sn-glycero-3-phosphate + H2O = 2-(5Z,8Z,11Z,14Z-eicosatetraenoyl)-sn-glycero-3-phosphate + octadecanoate + H(+). The enzyme catalyses a 1,2-diacyl-sn-glycero-3-phospho-L-serine + H2O = a 2-acyl-sn-glycero-3-phospho-L-serine + a fatty acid + H(+). The catalysed reaction is a 1,2-diacyl-sn-glycero-3-phosphocholine + H2O = a 2-acyl-sn-glycero-3-phosphocholine + a fatty acid + H(+). It catalyses the reaction 1,2-di-(9Z-octadecenoyl)-sn-glycero-3-phosphocholine + H2O = (9Z-octadecenoyl)-sn-glycero-3-phosphocholine + (9Z)-octadecenoate + H(+). It carries out the reaction a 1,2-diacyl-sn-glycero-3-phosphoethanolamine + H2O = a 2-acyl-sn-glycero-3-phosphoethanolamine + a fatty acid + H(+). The enzyme catalyses a 1,2-diacyl-sn-glycero-3-phospho-(1'-sn-glycerol) + H2O = 2-acyl-sn-glycero-3-phospho-(1'-sn-glycerol) + a fatty acid + H(+). The catalysed reaction is 1-hexadecanoyl-2-(9Z-octadecenoyl)-sn-glycero-3-phospho-(1'-sn-glycerol) + H2O = 2-(9Z-octadecenoyl)-sn-glycero-3-phospho-(1'-sn-glycerol) + hexadecanoate + H(+). It catalyses the reaction 1-acyl-2-(5Z,8Z,11Z,14Z-eicosatetraenoyl)-sn-glycero-3-phosphocholine + H2O = 2-(5Z,8Z,11Z,14Z)-eicosatetraenoyl-sn-glycero-3-phosphocholine + a fatty acid + H(+). It carries out the reaction 1-acyl-2-(5Z,8Z,11Z,14Z)-eicosatetraenoyl-sn-glycero-3-phosphoethanolamine + H2O = 2-(5Z,8Z,11Z,14Z)-eicosatetraenoyl-sn-glycero-3-phosphoethanolamine + a fatty acid + H(+). Its pathway is phospholipid metabolism; phosphatidylinositol metabolism. Its function is as follows. Phospholipase A1 (PLA1) that hydrolyzes ester bonds at the sn-1 position of glycerophospholipids producing a free fatty acid and a lysophospholipid. Prefers phosphatidate (1,2-diacyl-sn-glycero-3-phosphate, PA) as substrate in vitro, but can efficiently hydrolyze phosphatidylinositol (1,2-diacyl-sn-glycero-3-phospho-(1D-myo-inositol), PI), as well as a range of other glycerophospholipid substrates such as phosphatidylcholine (1,2-diacyl-sn-glycero-3-phosphocholine, PC), phosphatidylethanolamine (1,2-diacyl-sn-glycero-3-phosphoethanolamine, PE), phosphatidylserine (1,2-diacyl-sn-glycero-3-phospho-L-serine, PS) and phosphatidylglycerol (1,2-diacyl-sn-glycero-3-phospho-(1'-sn-glycerol), PG). Involved in the regulation of the endogenous content of polyunsaturated PI and PS lipids in the nervous system. Changes in these lipids extend to downstream metabolic products like PI phosphates PIP and PIP2, which play fundamental roles in cell biology. Regulates mitochondrial morphology. These dynamic changes may be due to PA hydrolysis at the mitochondrial surface. May play a regulatory role in spermatogenesis or sperm function. The chain is Phospholipase DDHD1 from Mus musculus (Mouse).